Consider the following 331-residue polypeptide: Probable allantoicase (331 aa).

The protein belongs to the allantoicase family.

The catalysed reaction is allantoate + H2O = (S)-ureidoglycolate + urea. It participates in nitrogen metabolism; (S)-allantoin degradation; (S)-ureidoglycolate from allantoate (aminidohydrolase route): step 1/1. The chain is Probable allantoicase from Pseudomonas syringae pv. tomato (strain ATCC BAA-871 / DC3000).